The following is a 285-amino-acid chain: Diaminopimelate epimerase 2 (285 aa).

Substrate contacts are provided by residues Asn11, Asn63, 73–74 (GN), Asn158, Asn191, 209–210 (ER), and 219–220 (GS).

The protein belongs to the diaminopimelate epimerase family. As to quaternary structure, homodimer.

The protein resides in the cytoplasm. The catalysed reaction is (2S,6S)-2,6-diaminopimelate = meso-2,6-diaminopimelate. Its pathway is amino-acid biosynthesis; L-lysine biosynthesis via DAP pathway; DL-2,6-diaminopimelate from LL-2,6-diaminopimelate: step 1/1. In terms of biological role, catalyzes the stereoinversion of LL-2,6-diaminopimelate (L,L-DAP) to meso-diaminopimelate (meso-DAP), a precursor of L-lysine and an essential component of the bacterial peptidoglycan. The polypeptide is Diaminopimelate epimerase 2 (Nostoc sp. (strain PCC 7120 / SAG 25.82 / UTEX 2576)).